A 325-amino-acid polypeptide reads, in one-letter code: Golgi to ER traffic protein 4 homolog B (325 aa).

Disordered regions lie at residues 1-22 and 306-325; these read MAAA…GGVQ and SGED…IELD. Positions 307–317 are enriched in acidic residues; it reads GEDDDVEDGQE.

It belongs to the GET4 family. As to quaternary structure, component of the bag6/bat3 complex.

It is found in the cytoplasm. Its subcellular location is the cytosol. As part of a cytosolic protein quality control complex, the bag6/bat3 complex, maintains misfolded and hydrophobic patches-containing proteins in a soluble state and participates in their proper delivery to the endoplasmic reticulum or alternatively can promote their sorting to the proteasome where they undergo degradation. The bag6/bat3 complex is involved in the post-translational delivery of tail-anchored/type II transmembrane proteins to the endoplasmic reticulum membrane. Similarly, the bag6/bat3 complex also functions as a sorting platform for proteins of the secretory pathway that are mislocalized to the cytosol either delivering them to the proteasome for degradation or to the endoplasmic reticulum. The bag6/bat3 complex also plays a role in the endoplasmic reticulum-associated degradation (ERAD), a quality control mechanism that eliminates unwanted proteins of the endoplasmic reticulum through their retrotranslocation to the cytosol and their targeting to the proteasome. It maintains these retrotranslocated proteins in an unfolded yet soluble state condition in the cytosol to ensure their proper delivery to the proteasome. The protein is Golgi to ER traffic protein 4 homolog B (get4-b) of Xenopus laevis (African clawed frog).